Here is a 244-residue protein sequence, read N- to C-terminus: 1-(5-phosphoribosyl)-5-[(5-phosphoribosylamino)methylideneamino] imidazole-4-carboxamide isomerase (244 aa).

The Proton acceptor role is filled by D15. D136 acts as the Proton donor in catalysis.

It belongs to the HisA/HisF family.

It is found in the cytoplasm. The enzyme catalyses 1-(5-phospho-beta-D-ribosyl)-5-[(5-phospho-beta-D-ribosylamino)methylideneamino]imidazole-4-carboxamide = 5-[(5-phospho-1-deoxy-D-ribulos-1-ylimino)methylamino]-1-(5-phospho-beta-D-ribosyl)imidazole-4-carboxamide. It functions in the pathway amino-acid biosynthesis; L-histidine biosynthesis; L-histidine from 5-phospho-alpha-D-ribose 1-diphosphate: step 4/9. The sequence is that of 1-(5-phosphoribosyl)-5-[(5-phosphoribosylamino)methylideneamino] imidazole-4-carboxamide isomerase from Dehalococcoides mccartyi (strain CBDB1).